The primary structure comprises 384 residues: MNNIRPKYYAFYNKISEGYYNPLYRKGLNKDTIYEIMVEDGFPTEKNVSFVSIENIFQQINFGSHIAEVFVPGYVKTSYNETTLKHYADMCIIGDIMNFYDINTIRYLIDNGANIKNCGNLLCQASQLGCIDIVKLLVKTSEKEFSGMDDLTRSNKLISTQEIFTDFKNNDHNVCILIAIVYKHIDVVKYFISIGEILSVKDDSLYFKLACDTGCLNIIKYLLEIGFDIESNNNYCLMISTINGRNDIVEYIKSRGVNPNNHVKKCIQIITNHNDDLKSSDIFLMTKFIKTTGVNSNILYQLLLIACEYGYYSMTMYLIKAGIKPTNSCLKIACKNNKFNIVKLITKYPKTRLDINVDNNYCMKQAIFHKNKDMVDYLTNFKYV.

7 ANK repeats span residues 88-117, 119-146, 171-200, 202-231, 233-261, 298-324, and 325-357; these read ADMCIIGDIMNFYDINTIRYLIDNGANIKN, GNLLCQASQLGCIDIVKLLVKTSEKEFS, DHNVCILIAIVYKHIDVVKYFISIGEILSV, DDSLYFKLACDTGCLNIIKYLLEIGFDIES, NNYCLMISTINGRNDIVEYIKSRGVNPNN, ILYQLLLIACEYGYYSMTMYLIKAGIK, and PTNSCLKIACKNNKFNIVKLITKYPKTRLDINV.

In Acanthamoeba polyphaga (Amoeba), this protein is Putative ankyrin repeat protein L72.